Consider the following 231-residue polypeptide: Protein OPG061 (231 aa).

It belongs to the orthopoxvirus OPG058 family.

The protein localises to the host nucleus. Its subcellular location is the host nucleolus. In Variola virus, this protein is Protein OPG061 (OPG061).